The following is a 34-amino-acid chain: MSDIN-like toxin proprotein 4 (34 aa).

Residues 1–10 (MSDINTARLP) constitute a propeptide that is removed on maturation. Positions 11–20 (LFLPPVRMPP) form a cross-link, cyclopeptide (Leu-Pro). Positions 21–34 (CVGDDIEMVLTRGE) are excised as a propeptide.

Belongs to the MSDIN fungal toxin family. In terms of processing, processed by the macrocyclase-peptidase enzyme POPB to yield a toxic cyclic decapeptide. POPB first removes 10 residues from the N-terminus. Conformational trapping of the remaining peptide forces the enzyme to release this intermediate rather than proceed to macrocyclization. The enzyme rebinds the remaining peptide in a different conformation and catalyzes macrocyclization of the N-terminal 10 residues.

In terms of biological role, probable toxin that belongs to the MSDIN-like toxin family responsible for a large number of food poisoning cases and deaths. In Amanita bisporigera (Destroying angel), this protein is MSDIN-like toxin proprotein 4.